We begin with the raw amino-acid sequence, 239 residues long: MGKSLIQQRRGKGTTTFRAPSHRYRGAVRYVPLNLVQERTLRGVVEEILHDPGRTAPVARVKFEDGTKKLIIAPEGVLVGQEIYIGPEAPIAIGNTLPLAKIPEGTYVYDIEGVPGDGGKYVRAGGTYALVVSREKDKVIVQLPSGELKAFNPMCRATIGVVAGGGRLEKPIVKAGKAYYIAKARNRFWPKPRGVKMNAVNHPHGGKEHHIGRPSTVSRRAPPGRKVGHIAARRTGRRK.

The interval 200-239 (VNHPHGGKEHHIGRPSTVSRRAPPGRKVGHIAARRTGRRK) is disordered. Over residues 222 to 239 (PPGRKVGHIAARRTGRRK) the composition is skewed to basic residues.

This sequence belongs to the universal ribosomal protein uL2 family. As to quaternary structure, part of the 50S ribosomal subunit. Forms a bridge to the 30S subunit in the 70S ribosome.

In terms of biological role, one of the primary rRNA binding proteins. Required for association of the 30S and 50S subunits to form the 70S ribosome, for tRNA binding and peptide bond formation. It has been suggested to have peptidyltransferase activity; this is somewhat controversial. Makes several contacts with the 16S rRNA in the 70S ribosome. The sequence is that of Large ribosomal subunit protein uL2 from Thermococcus kodakarensis (strain ATCC BAA-918 / JCM 12380 / KOD1) (Pyrococcus kodakaraensis (strain KOD1)).